Consider the following 74-residue polypeptide: RRWDRREARRARTAFTYEQLVALENKFKTTRYLSVCERLNLALSLSLTETQVKIWFQNRRTKWKKQNPGLDVIS.

The homeobox DNA-binding region spans 8-67; it reads ARRARTAFTYEQLVALENKFKTTRYLSVCERLNLALSLSLTETQVKIWFQNRRTKWKKQN.

It localises to the nucleus. The sequence is that of Homeobox protein H40 from Apis mellifera (Honeybee).